We begin with the raw amino-acid sequence, 186 residues long: 2-oxoglutarate synthase subunit KorC (186 aa).

In terms of assembly, heterotetramer of the KorA, KorB, KorC and KorD subunits.

The catalysed reaction is 2 oxidized [2Fe-2S]-[ferredoxin] + 2-oxoglutarate + CoA = succinyl-CoA + 2 reduced [2Fe-2S]-[ferredoxin] + CO2 + H(+). In Methanothermobacter marburgensis (strain ATCC BAA-927 / DSM 2133 / JCM 14651 / NBRC 100331 / OCM 82 / Marburg) (Methanobacterium thermoautotrophicum), this protein is 2-oxoglutarate synthase subunit KorC (korC).